A 254-amino-acid chain; its full sequence is Hydroxyacylglutathione hydrolase (254 aa).

7 residues coordinate Zn(2+): His52, His54, Asp56, His57, His109, Asp126, and His164.

This sequence belongs to the metallo-beta-lactamase superfamily. Glyoxalase II family. As to quaternary structure, monomer. The cofactor is Zn(2+).

The enzyme catalyses an S-(2-hydroxyacyl)glutathione + H2O = a 2-hydroxy carboxylate + glutathione + H(+). It participates in secondary metabolite metabolism; methylglyoxal degradation; (R)-lactate from methylglyoxal: step 2/2. Functionally, thiolesterase that catalyzes the hydrolysis of S-D-lactoyl-glutathione to form glutathione and D-lactic acid. This chain is Hydroxyacylglutathione hydrolase, found in Stenotrophomonas maltophilia (strain R551-3).